A 100-amino-acid chain; its full sequence is Urease subunit gamma (100 aa).

Belongs to the urease gamma subunit family. In terms of assembly, heterotrimer of UreA (gamma), UreB (beta) and UreC (alpha) subunits. Three heterotrimers associate to form the active enzyme.

It localises to the cytoplasm. It carries out the reaction urea + 2 H2O + H(+) = hydrogencarbonate + 2 NH4(+). It participates in nitrogen metabolism; urea degradation; CO(2) and NH(3) from urea (urease route): step 1/1. This Limosilactobacillus fermentum (Lactobacillus fermentum) protein is Urease subunit gamma.